The chain runs to 390 residues: Putative glutamate--cysteine ligase 2 (390 aa).

It belongs to the glutamate--cysteine ligase type 2 family. YbdK subfamily.

It catalyses the reaction L-cysteine + L-glutamate + ATP = gamma-L-glutamyl-L-cysteine + ADP + phosphate + H(+). In terms of biological role, ATP-dependent carboxylate-amine ligase which exhibits weak glutamate--cysteine ligase activity. This chain is Putative glutamate--cysteine ligase 2, found in Chloroflexus aurantiacus (strain ATCC 29366 / DSM 635 / J-10-fl).